Reading from the N-terminus, the 235-residue chain is 5'-methylthioadenosine/S-adenosylhomocysteine nucleosidase (235 aa).

Glu-12 acts as the Proton acceptor in catalysis. Substrate-binding positions include Gly-78, Ile-152, and 173-174 (ME). The active-site Proton donor is Asp-197.

The protein belongs to the PNP/UDP phosphorylase family. MtnN subfamily. Homodimer.

The catalysed reaction is S-adenosyl-L-homocysteine + H2O = S-(5-deoxy-D-ribos-5-yl)-L-homocysteine + adenine. It catalyses the reaction S-methyl-5'-thioadenosine + H2O = 5-(methylsulfanyl)-D-ribose + adenine. It carries out the reaction 5'-deoxyadenosine + H2O = 5-deoxy-D-ribose + adenine. Its pathway is amino-acid biosynthesis; L-methionine biosynthesis via salvage pathway; S-methyl-5-thio-alpha-D-ribose 1-phosphate from S-methyl-5'-thioadenosine (hydrolase route): step 1/2. In terms of biological role, catalyzes the irreversible cleavage of the glycosidic bond in both 5'-methylthioadenosine (MTA) and S-adenosylhomocysteine (SAH/AdoHcy) to adenine and the corresponding thioribose, 5'-methylthioribose and S-ribosylhomocysteine, respectively. Also cleaves 5'-deoxyadenosine, a toxic by-product of radical S-adenosylmethionine (SAM) enzymes, into 5-deoxyribose and adenine. Thus, is required for in vivo function of the radical SAM enzymes biotin synthase and lipoic acid synthase, that are inhibited by 5'-deoxyadenosine accumulation. The protein is 5'-methylthioadenosine/S-adenosylhomocysteine nucleosidase of Proteus mirabilis (strain HI4320).